Here is a 271-residue protein sequence, read N- to C-terminus: Membrane protein insertase YidC 1 (271 aa).

Positions 1-20 (MKKKLKTFSLILLTGSLLVA) are cleaved as a signal peptide. C21 is lipidated: N-palmitoyl cysteine. C21 is lipidated: S-diacylglycerol cysteine. The next 4 membrane-spanning stretches (helical) occupy residues 45-65 (IQWL…TLII), 124-144 (YASV…FQAL), 163-183 (PDPY…STWL), and 201-221 (VMPF…VLYW).

Belongs to the OXA1/ALB3/YidC family. Type 2 subfamily.

The protein resides in the cell membrane. Its function is as follows. Required for the insertion and/or proper folding and/or complex formation of integral membrane proteins into the membrane. Involved in integration of membrane proteins that insert both dependently and independently of the Sec translocase complex, as well as at least some lipoproteins. In Streptococcus agalactiae serotype V (strain ATCC BAA-611 / 2603 V/R), this protein is Membrane protein insertase YidC 1.